The following is a 160-amino-acid chain: MAKETVEILIDGGKATPGPPLGPAIGPLGINMMQVVEEINRKTADFEGMKVPVKIIVDTDTRDFEVEVGTPPTTALIMDELKLEKGSQDPGMDKIADISMEQVLKIARMKFDALLSNDYKRAVKEIMGTCVSMGITVNGKDPREVQREVDQGVYDDLLTS.

Belongs to the universal ribosomal protein uL11 family. Part of the ribosomal stalk of the 50S ribosomal subunit. Interacts with L10 and the large rRNA to form the base of the stalk. L10 forms an elongated spine to which L12 dimers bind in a sequential fashion forming a multimeric L10(L12)X complex.

Its function is as follows. Forms part of the ribosomal stalk which helps the ribosome interact with GTP-bound translation factors. This chain is Large ribosomal subunit protein uL11, found in Methanothermobacter thermautotrophicus (strain ATCC 29096 / DSM 1053 / JCM 10044 / NBRC 100330 / Delta H) (Methanobacterium thermoautotrophicum).